A 452-amino-acid polypeptide reads, in one-letter code: CUGBP Elav-like family member 3 (452 aa).

3 consecutive RRM domains span residues isoleucine 7 to serine 88, arginine 94 to threonine 174, and cysteine 367 to proline 445.

The protein belongs to the CELF/BRUNOL family.

It is found in the nucleus. The protein resides in the cytoplasm. Its function is as follows. RNA-binding protein that may be involved in the regulation of pre-mRNA alternative splicing. The chain is CUGBP Elav-like family member 3 (celf3) from Danio rerio (Zebrafish).